The following is a 73-amino-acid chain: Conotoxin Cl14.8 (73 aa).

The signal sequence occupies residues 1–19; sequence MKLSVTFIALMLTMTLTQG. The propeptide occupies 20 to 47; it reads FVLQAIDGRDNSGLDDLSEADSMEHQLQ.

It belongs to the conotoxin L superfamily. In terms of processing, contains 2 disulfide bonds. In terms of tissue distribution, expressed by the venom duct.

The protein resides in the secreted. The polypeptide is Conotoxin Cl14.8 (Californiconus californicus (California cone)).